The following is a 200-amino-acid chain: Holliday junction resolvase RecU (200 aa).

The segment at 1-25 is disordered; it reads MTIRYPNGKRYNQASQPHKTPIKKH. Mg(2+) contacts are provided by T85, D87, E100, and Q119.

It belongs to the RecU family. It depends on Mg(2+) as a cofactor.

It localises to the cytoplasm. The enzyme catalyses Endonucleolytic cleavage at a junction such as a reciprocal single-stranded crossover between two homologous DNA duplexes (Holliday junction).. In terms of biological role, endonuclease that resolves Holliday junction intermediates in genetic recombination. Cleaves mobile four-strand junctions by introducing symmetrical nicks in paired strands. Promotes annealing of linear ssDNA with homologous dsDNA. Required for DNA repair, homologous recombination and chromosome segregation. This Bacillus cereus (strain ZK / E33L) protein is Holliday junction resolvase RecU.